Reading from the N-terminus, the 143-residue chain is NADH-quinone oxidoreductase subunit A (143 aa).

The next 3 membrane-spanning stretches (helical) occupy residues 8–28 (FGNV…GYLT), 63–83 (FYVV…LYPW), and 90–110 (LGVF…LGLV).

It belongs to the complex I subunit 3 family. NDH-1 is composed of 14 different subunits. Subunits NuoA, H, J, K, L, M, N constitute the membrane sector of the complex.

It is found in the cell inner membrane. The enzyme catalyses a quinone + NADH + 5 H(+)(in) = a quinol + NAD(+) + 4 H(+)(out). NDH-1 shuttles electrons from NADH, via FMN and iron-sulfur (Fe-S) centers, to quinones in the respiratory chain. The immediate electron acceptor for the enzyme in this species is believed to be a menaquinone. Couples the redox reaction to proton translocation (for every two electrons transferred, four hydrogen ions are translocated across the cytoplasmic membrane), and thus conserves the redox energy in a proton gradient. This is NADH-quinone oxidoreductase subunit A from Chlorobium phaeobacteroides (strain DSM 266 / SMG 266 / 2430).